Reading from the N-terminus, the 78-residue chain is Serine rich endogenous peptide 19 (78 aa).

An N-terminal signal peptide occupies residues 1 to 25; that stretch reads MCNIVVFLLTLTLFLFSGLSNTAFA. Residues 50 to 64 carry the SCOOP motif motif; sequence KIEVDGSCSRRAPGR. A SxS motif essential for MIK2 binding motif is present at residues 56 to 58; sequence SCS. The disordered stretch occupies residues 57–78; sequence CSRRAPGRRRPPNRPPKPCTKP. Pro residues predominate over residues 69–78; it reads NRPPKPCTKP.

It belongs to the serine rich endogenous peptide (SCOOP) phytocytokine family. In terms of assembly, interacts with MIK2 (via extracellular leucine-rich repeat domain); this interaction triggers the formation of complex between MIK2 and the BAK1/SERK3 and SERK4 coreceptors, and subsequent BAK1 activation by phosphorylation.

It is found in the cell membrane. The protein resides in the secreted. The protein localises to the extracellular space. It localises to the apoplast. In terms of biological role, brassicaceae-specific phytocytokine (plant endogenous peptide released into the apoplast) perceived by MIK2 in a BAK1/SERK3 and SERK4 coreceptors-dependent manner, that modulates various physiological and antimicrobial processes including growth prevention and reactive oxygen species (ROS) response regulation. This Arabidopsis thaliana (Mouse-ear cress) protein is Serine rich endogenous peptide 19.